The chain runs to 552 residues: CTP synthase (552 aa).

The tract at residues 1–270 (MTKFVFVTGG…DGLICDKLRL (270 aa)) is amidoligase domain. S13 provides a ligand contact to CTP. Residue S13 coordinates UTP. Residues 14–19 (SLGKGI) and D71 contribute to the ATP site. Residues D71 and E144 each coordinate Mg(2+). Residues 151–153 (DIE), 191–196 (KTKPTQ), and K227 contribute to the CTP site. Residues 191-196 (KTKPTQ) and K227 contribute to the UTP site. Residues 295-548 (KIAMVGKYVE…VKAAIERQKA (254 aa)) enclose the Glutamine amidotransferase type-1 domain. Position 357 (G357) interacts with L-glutamine. Residue C384 is the Nucleophile; for glutamine hydrolysis of the active site. L-glutamine contacts are provided by residues 385–388 (LGMQ), E408, and R474. Residues H521 and E523 contribute to the active site.

This sequence belongs to the CTP synthase family. Homotetramer.

The catalysed reaction is UTP + L-glutamine + ATP + H2O = CTP + L-glutamate + ADP + phosphate + 2 H(+). It catalyses the reaction L-glutamine + H2O = L-glutamate + NH4(+). It carries out the reaction UTP + NH4(+) + ATP = CTP + ADP + phosphate + 2 H(+). It functions in the pathway pyrimidine metabolism; CTP biosynthesis via de novo pathway; CTP from UDP: step 2/2. With respect to regulation, allosterically activated by GTP, when glutamine is the substrate; GTP has no effect on the reaction when ammonia is the substrate. The allosteric effector GTP functions by stabilizing the protein conformation that binds the tetrahedral intermediate(s) formed during glutamine hydrolysis. Inhibited by the product CTP, via allosteric rather than competitive inhibition. Its function is as follows. Catalyzes the ATP-dependent amination of UTP to CTP with either L-glutamine or ammonia as the source of nitrogen. Regulates intracellular CTP levels through interactions with the four ribonucleotide triphosphates. The sequence is that of CTP synthase from Delftia acidovorans (strain DSM 14801 / SPH-1).